The sequence spans 668 residues: Transketolase (668 aa).

His28 is a binding site for substrate. Residues His68 and 116–118 contribute to the thiamine diphosphate site; that span reads GPL. A Mg(2+)-binding site is contributed by Asp157. Thiamine diphosphate is bound by residues Gly158 and Asn187. Positions 187 and 189 each coordinate Mg(2+). Substrate-binding residues include His263, Arg358, and Ser385. Residue His263 participates in thiamine diphosphate binding. Glu412 acts as the Proton donor in catalysis. Position 438 (Phe438) interacts with thiamine diphosphate. His462, Asp470, His474, and Arg521 together coordinate substrate.

The protein belongs to the transketolase family. Homodimer. Requires Mg(2+) as cofactor. Thiamine diphosphate is required as a cofactor.

The catalysed reaction is D-sedoheptulose 7-phosphate + D-glyceraldehyde 3-phosphate = aldehydo-D-ribose 5-phosphate + D-xylulose 5-phosphate. Its function is as follows. Catalyzes the transfer of a two-carbon ketol group from a ketose donor to an aldose acceptor, likely via a covalent intermediate with the cofactor thiamine pyrophosphate. Can use L-erythrulose as donor and D-ribose-5-phosphate as acceptor substrates, forming glycolaldehyde and D-sedoheptulose-7-phosphate. For synthetic purposes, is able to use hydroxypyruvate (HPA) as donor substrate, making the reaction irreversible due to the release of carbon dioxide, and various aldehydes as acceptor substrates, which leads to the corresponding ketoses. Thus, using hydroxypyruvate as donor and three different aldehydes as acceptors, i.e. glycolaldehyde, D-glyceraldehyde and butyraldehyde, the enzyme stereoselectively forms the corresponding products L-erythrulose, D-xylulose and (3S)-1,3-dihydroxyhexan-2-one, respectively. The chain is Transketolase from Geobacillus stearothermophilus (Bacillus stearothermophilus).